The primary structure comprises 957 residues: Glycine dehydrogenase (decarboxylating) (957 aa).

Position 708 is an N6-(pyridoxal phosphate)lysine (K708).

This sequence belongs to the GcvP family. In terms of assembly, the glycine cleavage system is composed of four proteins: P, T, L and H. It depends on pyridoxal 5'-phosphate as a cofactor.

It carries out the reaction N(6)-[(R)-lipoyl]-L-lysyl-[glycine-cleavage complex H protein] + glycine + H(+) = N(6)-[(R)-S(8)-aminomethyldihydrolipoyl]-L-lysyl-[glycine-cleavage complex H protein] + CO2. In terms of biological role, the glycine cleavage system catalyzes the degradation of glycine. The P protein binds the alpha-amino group of glycine through its pyridoxal phosphate cofactor; CO(2) is released and the remaining methylamine moiety is then transferred to the lipoamide cofactor of the H protein. The protein is Glycine dehydrogenase (decarboxylating) of Escherichia coli O8 (strain IAI1).